The chain runs to 390 residues: Leu/Ile/Val-binding protein homolog 6 (390 aa).

An N-terminal signal peptide occupies residues 1-21; it reads MKKIALTALAVFSLAASAAYA.

Belongs to the leucine-binding protein family.

Component of an amino-acid transport system. This is Leu/Ile/Val-binding protein homolog 6 from Brucella suis biovar 1 (strain 1330).